A 965-amino-acid polypeptide reads, in one-letter code: Vacuolar membrane protease (965 aa).

The Cytoplasmic portion of the chain corresponds to 1-16; sequence MARPSLSPSNPLGFTP. The chain crosses the membrane as a helical span at residues 17 to 37; it reads WPVTVITAVVYLALVVPLLVV. The Vacuolar portion of the chain corresponds to 38 to 387; sequence HHVVPSAPSS…SAFVVFELHT (350 aa). Residues asparagine 53 and asparagine 119 are each glycosylated (N-linked (GlcNAc...) asparagine). Zn(2+) contacts are provided by histidine 171 and aspartate 183. Residue glutamate 217 is the Proton acceptor of the active site. 3 residues coordinate Zn(2+): glutamate 218, glutamate 243, and histidine 316. Residues 388 to 408 form a helical membrane-spanning segment; it reads LFALSVTLLVVAPLVLLVTSI. Residues 409–441 are Cytoplasmic-facing; that stretch reads ALARADKMYLFRSSASPEDSDGSEVVPLHGVRG. Residues 442-462 traverse the membrane as a helical segment; that stretch reads FFRFPFLLVIPTAVTVGLAYL. At 463–472 the chain is on the vacuolar side; the sequence is VTKFNPYIIH. Residues 473 to 493 traverse the membrane as a helical segment; the sequence is SSEYAVWSMMISAWVFLAWFV. At 494–507 the chain is on the cytoplasmic side; that stretch reads SRVADFARPSAFHR. The chain crosses the membrane as a helical span at residues 508–528; sequence VYTLTWLFLVEWVFLVISTVY. Over 529-532 the chain is Vacuolar; it reads ENQY. Residues 533–553 form a helical membrane-spanning segment; that stretch reads GLAGGYFVLFVFAGTFLATWI. Topologically, residues 554–661 are cytoplasmic; it reads SYLELFALPR…WSIHLPKWVW (108 aa). The segment at 577-610 is disordered; that stretch reads RTSSHGSRLGTASGEDVEDGEDEDDDGTTAEATE. The span at 591 to 604 shows a compositional bias: acidic residues; sequence EDVEDGEDEDDDGT. Residues 662–682 form a helical membrane-spanning segment; it reads VLQFLLTAPLVLIFVGPLALL. Residues 683-698 are Vacuolar-facing; it reads LTSALRQTGQDGSPSL. Residues 699-719 form a helical membrane-spanning segment; the sequence is FIYIAVAALTTLLFIPLLPFI. Residues 720–725 are Cytoplasmic-facing; the sequence is HRYTHH. A helical membrane pass occupies residues 726–746; it reads IPLFLLCVFAGTLIYNLVAFP. Over 747–965 the chain is Vacuolar; the sequence is FSPANRLKLF…LVEGSRRFEV (219 aa). N-linked (GlcNAc...) asparagine glycans are attached at residues asparagine 793 and asparagine 830.

This sequence belongs to the peptidase M28 family. The cofactor is Zn(2+).

Its subcellular location is the vacuole membrane. May be involved in vacuolar sorting and osmoregulation. The chain is Vacuolar membrane protease from Aspergillus fumigatus (strain CBS 144.89 / FGSC A1163 / CEA10) (Neosartorya fumigata).